The chain runs to 324 residues: NADH-quinone oxidoreductase subunit H 2 (324 aa).

Helical transmembrane passes span 1–21 (MIGM…LLVV), 77–97 (ILAP…VAFG), 109–129 (VMFL…GALA), 147–167 (LGYE…AGSL), 179–199 (VWFV…GVAA), 214–234 (LVAG…FLGE), 238–258 (VLLV…GPVW), 263–283 (LPGP…FIWI), and 298–318 (FAWK…GLIV).

This sequence belongs to the complex I subunit 1 family. In terms of assembly, NDH-1 is composed of 14 different subunits. Subunits NuoA, H, J, K, L, M, N constitute the membrane sector of the complex.

The protein localises to the cell inner membrane. The catalysed reaction is a quinone + NADH + 5 H(+)(in) = a quinol + NAD(+) + 4 H(+)(out). In terms of biological role, NDH-1 shuttles electrons from NADH, via FMN and iron-sulfur (Fe-S) centers, to quinones in the respiratory chain. The immediate electron acceptor for the enzyme in this species is believed to be ubiquinone. Couples the redox reaction to proton translocation (for every two electrons transferred, four hydrogen ions are translocated across the cytoplasmic membrane), and thus conserves the redox energy in a proton gradient. This subunit may bind ubiquinone. In Rhodopseudomonas palustris (strain BisB18), this protein is NADH-quinone oxidoreductase subunit H 2.